The following is a 915-amino-acid chain: Metabotropic glutamate receptor 7 (915 aa).

An N-terminal signal peptide occupies residues 1–34; the sequence is MVQLRKLLRVLTLMKFPCCVLEVLLCALAAAARG. At 35–590 the chain is on the extracellular side; sequence QEMYAPHSIR…IIKLEWHSPW (556 aa). Cysteine 67 and cysteine 109 are joined by a disulfide. An N-linked (GlcNAc...) asparagine glycan is attached at asparagine 98. L-glutamate is bound by residues serine 159, 180–182, tyrosine 230, and aspartate 314; that span reads AST. Intrachain disulfides connect cysteine 249/cysteine 541, cysteine 374/cysteine 390, cysteine 430/cysteine 437, cysteine 523/cysteine 542, cysteine 527/cysteine 545, cysteine 548/cysteine 560, and cysteine 563/cysteine 576. Residue lysine 407 coordinates L-glutamate. Residues asparagine 458 and asparagine 486 are each glycosylated (N-linked (GlcNAc...) asparagine). A glycan (N-linked (GlcNAc...) asparagine) is linked at asparagine 572. The helical transmembrane segment at 591 to 615 threads the bilayer; the sequence is AVIPVFLAMLGIIATIFVMATFIRY. At 616–627 the chain is on the cytoplasmic side; that stretch reads NDTPIVRASGRE. The helical transmembrane segment at 628–648 threads the bilayer; that stretch reads LSYVLLTGIFLCYIITFLMIA. Residues 649–654 are Extracellular-facing; sequence KPDVAV. A helical transmembrane segment spans residues 655–675; the sequence is CSFRRVFLGLGMCISYAALLT. The Cytoplasmic segment spans residues 676 to 702; it reads KTNRIYRIFEQGKKSVTAPRLISPTSQ. A helical membrane pass occupies residues 703-723; the sequence is LAITSSLISVQLLGVFIWFGV. Residues 724 to 753 are Extracellular-facing; that stretch reads DPPNIIIDYDEHKTMNPEQARGVLKCDITD. The chain crosses the membrane as a helical span at residues 754–775; that stretch reads LQIICSLGYSILLMVTCTVYAI. Topologically, residues 776-788 are cytoplasmic; that stretch reads KTRGVPENFNEAK. The helical transmembrane segment at 789–810 threads the bilayer; sequence PIGFTMYTTCIVWLAFIPIFFG. The Extracellular segment spans residues 811 to 825; it reads TAQSAEKLYIQTTTL. A helical transmembrane segment spans residues 826 to 850; the sequence is TISMNLSASVALGMLYMPKVYIIIF. The Cytoplasmic segment spans residues 851–915; that stretch reads HPELNVQKRK…KYVSYNNLVI (65 aa). The tract at residues 874 to 895 is disordered; it reads SRLSHKPSDRPNGEAKTELCEN. Residues 879 to 892 are compositionally biased toward basic and acidic residues; sequence KPSDRPNGEAKTEL. A Phosphoserine modification is found at serine 900.

Belongs to the G-protein coupled receptor 3 family. Homodimer. Interacts with PICK1. In terms of processing, N-glycosylated. In terms of tissue distribution, expressed in many areas of the brain, especially in the cerebral cortex, hippocampus, and cerebellum. Expression of GRM7 isoforms in non-neuronal tissues appears to be restricted to isoform 3 and isoform 4.

The protein resides in the cell membrane. G-protein coupled receptor activated by glutamate that regulates axon outgrowth through the MAPK-cAMP-PKA signaling pathway during neuronal development. Ligand binding causes a conformation change that triggers signaling via guanine nucleotide-binding proteins (G proteins) and modulates the activity of downstream effectors, such as adenylate cyclase that it inhibits. In Homo sapiens (Human), this protein is Metabotropic glutamate receptor 7 (GRM7).